The chain runs to 452 residues: Maltoporin (452 aa).

The first 25 residues, 1-25 (MMITLRKLPLAVAVAAGVMSAQAMA), serve as a signal peptide directing secretion.

The protein belongs to the porin LamB (TC 1.B.3) family. Homotrimer formed of three 18-stranded antiparallel beta-barrels, containing three independent channels.

The protein localises to the cell outer membrane. It catalyses the reaction beta-maltose(in) = beta-maltose(out). Involved in the transport of maltose and maltodextrins. The sequence is that of Maltoporin from Salmonella enteritidis PT4 (strain P125109).